The sequence spans 105 residues: Large ribosomal subunit protein eL30 (105 aa).

This sequence belongs to the eukaryotic ribosomal protein eL30 family.

In Candida glabrata (strain ATCC 2001 / BCRC 20586 / JCM 3761 / NBRC 0622 / NRRL Y-65 / CBS 138) (Yeast), this protein is Large ribosomal subunit protein eL30 (RPL30).